Reading from the N-terminus, the 396-residue chain is Lysophospholipid transporter LplT (396 aa).

Over 1–17 (MSESVHTNTSLWSKGMK) the chain is Periplasmic. The helical transmembrane segment at 18-38 (AVIVAQFLSAFGDNALLFATL) threads the bilayer. The Cytoplasmic portion of the chain corresponds to 39 to 52 (ALLKAQFYPEWSQP). A helical membrane pass occupies residues 53–73 (ILQMVFVGAYILLAPFVGQVA). The Periplasmic portion of the chain corresponds to 74 to 90 (DSFAKGRVMMFANGLKL). Residues 91–111 (LGAASICFGINPFLGYTLVGV) traverse the membrane as a helical segment. Over 112–144 (GAAAYSPAKYGILGELTTGSKLVKANGLMEASA) the chain is Cytoplasmic. The chain crosses the membrane as a helical span at residues 145-165 (IAAILLGSVAGGVLADWHVLV). Residue alanine 166 is a topological domain, periplasmic. Residues 167 to 187 (LAACALAYGGAVVANIYIPKL) traverse the membrane as a helical segment. At 188–225 (AARPGQSWNLINMTRSFLNACTSLWCNGETRFSLVGAS) the chain is on the cytoplasmic side. A helical membrane pass occupies residues 226 to 246 (LFWGAGVTLRFLLVLWVPVAL). Residues 247 to 255 (GITDNATPT) lie on the Periplasmic side of the membrane. The chain crosses the membrane as a helical span at residues 256-276 (YLNAMVAIGIVVGAGAAAKLV). Residues 277 to 279 (TLE) are Cytoplasmic-facing. A helical membrane pass occupies residues 280–300 (TVSRCMPAGILIGVVVLIFSL). The Periplasmic segment spans residues 301–303 (QHE). Residues 304–324 (LLPAYALLMLIGVLGGFFVVP) traverse the membrane as a helical segment. Residues 325–342 (LNALLQERGKKSVGAGNA) are Cytoplasmic-facing. The chain crosses the membrane as a helical span at residues 343–363 (IAVQNLGENSAMLLMLGIYSL). The Periplasmic portion of the chain corresponds to 364 to 365 (AV). A helical transmembrane segment spans residues 366 to 386 (MVGIPVVPIGIGFGALFALAI). Over 387–396 (TALWIWQRRH) the chain is Cytoplasmic.

This sequence belongs to the major facilitator superfamily. LplT (TC 2.A.1.42) family.

The protein localises to the cell inner membrane. Functionally, catalyzes the facilitated diffusion of 2-acyl-glycero-3-phosphoethanolamine (2-acyl-GPE) into the cell. The polypeptide is Lysophospholipid transporter LplT (Shigella flexneri serotype 5b (strain 8401)).